The following is a 315-amino-acid chain: Olfactory receptor 3A1 (315 aa).

Residues 1–28 (MQPESGANGTVIAEFILLGLLEAPGLQP) lie on the Extracellular side of the membrane. N-linked (GlcNAc...) asparagine glycosylation occurs at asparagine 8. Residues 29–52 (VVFVLFLFAYLVTVGGNLSILAAV) traverse the membrane as a helical segment. Residues 53–60 (LVEPKLHS) lie on the Cytoplasmic side of the membrane. A helical membrane pass occupies residues 61-82 (PMYFFLGNLSVLDVGCISVTVP). At 83–103 (SMLSRLLSRKRAVPCGACLTQ) the chain is on the extracellular side. Cysteine 100 and cysteine 192 are disulfide-bonded. A helical transmembrane segment spans residues 104–123 (LFFFHLFVGVDCFLLTAMAY). Over 124–143 (DRFLAICRPLTYSTRMSQTV) the chain is Cytoplasmic. Residues 144–161 (QRMLVAASWACAFTNALT) form a helical membrane-spanning segment. At 162–199 (HTVAMSTLNFCGPNEVNHFYCDLPQLFQLSCSSTQLNE) the chain is on the extracellular side. The helical transmembrane segment at 200–223 (LLLFAVGFIMAGTPMALIVISYIH) threads the bilayer. Residues 224 to 240 (VAAAVLRIRSVEGRKKA) are Cytoplasmic-facing. The helical transmembrane segment at 241–264 (FSTCGSHLTVVAMFYGSGIFNYMR) threads the bilayer. Over 265 to 275 (LGSTKLSDKDK) the chain is Extracellular. The helical transmembrane segment at 276–295 (AVGIFNTVINPMVNPIIYRF) threads the bilayer. The Cytoplasmic segment spans residues 296–315 (RNPEVQSAIWRMLTGRRSLA).

Belongs to the G-protein coupled receptor 1 family.

The protein localises to the cell membrane. Odorant receptor. This chain is Olfactory receptor 3A1 (OR3A1), found in Pan troglodytes (Chimpanzee).